We begin with the raw amino-acid sequence, 1026 residues long: Vacuolar protein sorting-associated protein 18 homolog (1026 aa).

Residues 858-896 (IVDFLKRNKQRLEKLERSMKEATEIASEIRDKQEKLKNR) are a coiled coil. The segment at 906 to 932 (CSHCARPISGRAFNVHSCRHFFHRECL) adopts an RING-type; degenerate zinc-finger fold.

In terms of assembly, probable core component of at least two putative endosomal tethering complexes, the homotypic fusion and vacuole protein sorting (HOPS) complex and the class C core vacuole/endosome tethering (CORVET) complex. Their common core is composed of the class C Vps proteins vps-11, vps-16 and vps-18, which in HOPS further associates with vps-33.1, vps-39 and vps-41 and in CORVET with vps-8 and vps-33.2. In hermaphrodites, expressed in coelomocytes and gonadal sheath cells.

It localises to the cytoplasm. The protein resides in the late endosome membrane. It is found in the lysosome membrane. The protein localises to the early endosome. Its subcellular location is the cytoplasmic vesicle. It localises to the autophagosome. The protein resides in the clathrin-coated vesicle. Plays a role in vesicle-mediated protein trafficking to lysosomal compartments including the endocytic membrane transport and autophagic pathways. Believed to act as a core component of the putative HOPS and CORVET endosomal tethering complexes which are proposed to be involved in the rab-5-to-rab-7 endosome conversion probably implicating sand-1, and via binding SNAREs and SNARE complexes to mediate tethering and docking events during SNARE-mediated membrane fusion. The HOPS complex is proposed to be recruited to rab-7 on the late endosomal membrane and to regulate late endocytic, phagocytic and autophagic traffic towards lysosomes. Within the HOPS complex, contributes to the normal development of gut granules in intestinal cells of the embryo, and also promotes the trafficking of embryonic intestinal gut granules away from lysosomes. The CORVET complex is proposed to function as a rab-5 effector to mediate early endosome fusion probably in specific endosome subpopulations. Required for fusion of endosomes and autophagosomes with lysosomes. Plays a role in the degradation of apoptotic cells during programmed cell death. The polypeptide is Vacuolar protein sorting-associated protein 18 homolog (Caenorhabditis elegans).